Consider the following 533-residue polypeptide: ATP synthase F(1) complex catalytic subunit beta, mitochondrial (533 aa).

The N-terminal 53 residues, 1 to 53, are a transit peptide targeting the mitochondrion; that stretch reads MLGLAGRCSAAAASAARPALRRAAGPSHGFLPLLLSRGAGPAAAVGARRDHAA. Positions 214, 215, 216, 217, 218, and 219 each coordinate ADP. Gly-214 provides a ligand contact to ATP. The phosphate site is built by Gly-214, Val-215, Gly-216, Lys-217, and Thr-218. 4 residues coordinate ATP: Gly-216, Lys-217, Thr-218, and Val-219. Thr-218 contacts Mg(2+). Glu-243 lines the Mg(2+) pocket. Position 244 (Arg-244) interacts with ATP.

Homotrimer. Component of the ATP synthase complex composed at least of ATP5F1A/subunit alpha, ATP5F1B/subunit beta, ATP5MC1/subunit c (homooctomer), MT-ATP6/subunit a, MT-ATP8/subunit 8, ATP5ME/subunit e, ATP5MF/subunit f, ATP5MG/subunit g, ATP5MK/subunit k, ATP5MJ/subunit j, ATP5F1C/subunit gamma, ATP5F1D/subunit delta, ATP5F1E/subunit epsilon, ATP5PF/subunit F6, ATP5PB/subunit b, ATP5PD/subunit d, ATP5PO/subunit OSCP. ATP synthase complex consists of a soluble F(1) head domain (subunits alpha(3) and beta(3)) - the catalytic core - and a membrane F(0) domain - the membrane proton channel (subunits c, a, 8, e, f, g, k and j). These two domains are linked by a central stalk (subunits gamma, delta, and epsilon) rotating inside the F1 region and a stationary peripheral stalk (subunits F6, b, d, and OSCP).

Its subcellular location is the mitochondrion inner membrane. It carries out the reaction ATP + H2O + 4 H(+)(in) = ADP + phosphate + 5 H(+)(out). Functionally, catalytic subunit beta, of the mitochondrial membrane ATP synthase complex (F(1)F(0) ATP synthase or Complex V) that produces ATP from ADP in the presence of a proton gradient across the membrane which is generated by electron transport complexes of the respiratory chain. ATP synthase complex consist of a soluble F(1) head domain - the catalytic core - and a membrane F(1) domain - the membrane proton channel. These two domains are linked by a central stalk rotating inside the F(1) region and a stationary peripheral stalk. During catalysis, ATP synthesis in the catalytic domain of F(1) is coupled via a rotary mechanism of the central stalk subunits to proton translocation. In vivo, can only synthesize ATP although its ATP hydrolase activity can be activated artificially in vitro. With the subunit alpha (ATP5F1A), forms the catalytic core in the F(1) domain. This is ATP synthase F(1) complex catalytic subunit beta, mitochondrial from Gallus gallus (Chicken).